The chain runs to 660 residues: Protein FAM161A (660 aa).

2 coiled-coil regions span residues E93 to K120 and Y296 to A320. A required for interaction with CFAP418 region spans residues Q341–Q525. Glycyl lysine isopeptide (Lys-Gly) (interchain with G-Cter in SUMO2) cross-links involve residues K468 and K484. Residues G522–R552 are a coiled coil. The interval K605–H660 is disordered. Over residues S606–R623 the composition is skewed to basic and acidic residues. Residues E645–H660 show a composition bias toward acidic residues.

It belongs to the FAM161 family. Interacts (via central region) with CFAP418 (via N-terminus); the interaction is direct. Interacts (via C-terminus) with microtubules. Interacts with LCA5. Interacts with CEP290. Interacts with SDCCAG8. Interacts with FAM161B. Interacts with POC1B. Interacts with CEP78. Forms a microtubule-associated complex with POC5, CETN2 and POC1B. Interacts with CCDC15. Isoform 1 and isoform 3 are widely expressed with highest levels in retina and testis, with isoform 1 being the most abundant in all tissues tested.

The protein resides in the cytoplasm. It is found in the cytoskeleton. The protein localises to the cilium basal body. It localises to the cell projection. Its subcellular location is the cilium. The protein resides in the microtubule organizing center. It is found in the centrosome. The protein localises to the centriole. Its function is as follows. Involved in ciliogenesis. In Homo sapiens (Human), this protein is Protein FAM161A (FAM161A).